The following is a 719-amino-acid chain: Catalase-3 (719 aa).

The signal sequence occupies residues 1–18 (MRVNALLPLSGLIGTALA). The propeptide occupies 19-30 (ACPFADPSALGR). Catalysis depends on residues His102 and Asn175. Position 389 (Tyr389) interacts with heme.

This sequence belongs to the catalase family. The cofactor is heme.

The catalysed reaction is 2 H2O2 = O2 + 2 H2O. Its function is as follows. Occurs in almost all aerobically respiring organisms and serves to protect cells from the toxic effects of hydrogen peroxide. The polypeptide is Catalase-3 (cat-3) (Neurospora crassa (strain ATCC 24698 / 74-OR23-1A / CBS 708.71 / DSM 1257 / FGSC 987)).